The primary structure comprises 329 residues: MSNFSITVIGAGAYGTALAVSFSKKNRKVFLWGRNKKHMQSLKKDRCNKKFLPKINFPNDLKIEISLKKAIKYSNTIVIAVPSIGFKNILIKIQPFLNKNVFLICGTKGLEPRTGRLLQEVVYDILGRETCLSIISGPSFARYLAIGLPTSMVLANNCIKTCKFLANKLKNKFLNIYSISDLVGVQIGGVIKNVIAIASGMSDGIQMGPNAKTAIITYGLEEMYKLGKVMGANEYTFMGMSGVGDLVLTCTDDESRNRKFGILLAQGYSIENAKSKVGCIIEGYNNIKEILILSCKHKINMPIIKQVYKILYMHQPVKKSILNIFLNKK.

The NADPH site is built by tyrosine 14, arginine 34, and lysine 108. Sn-glycerol 3-phosphate contacts are provided by lysine 108, glycine 137, and serine 139. Residue alanine 141 participates in NADPH binding. 5 residues coordinate sn-glycerol 3-phosphate: lysine 192, aspartate 245, serine 255, arginine 256, and asparagine 257. The Proton acceptor role is filled by lysine 192. Residue arginine 256 participates in NADPH binding. The NADPH site is built by isoleucine 280 and glutamate 282.

Belongs to the NAD-dependent glycerol-3-phosphate dehydrogenase family.

The protein resides in the cytoplasm. The catalysed reaction is sn-glycerol 3-phosphate + NAD(+) = dihydroxyacetone phosphate + NADH + H(+). The enzyme catalyses sn-glycerol 3-phosphate + NADP(+) = dihydroxyacetone phosphate + NADPH + H(+). The protein operates within membrane lipid metabolism; glycerophospholipid metabolism. In terms of biological role, catalyzes the reduction of the glycolytic intermediate dihydroxyacetone phosphate (DHAP) to sn-glycerol 3-phosphate (G3P), the key precursor for phospholipid synthesis. The protein is Glycerol-3-phosphate dehydrogenase [NAD(P)+] of Wigglesworthia glossinidia brevipalpis.